The following is a 386-amino-acid chain: S-adenosylmethionine synthase (386 aa).

H17 is an ATP binding site. D19 serves as a coordination point for Mg(2+). E45 lines the K(+) pocket. L-methionine contacts are provided by E58 and Q101. The flexible loop stretch occupies residues 101–111 (QSPDISQGVTE). ATP contacts are provided by residues 168–170 (DAK), D242, 248–249 (RK), A265, and K269. D242 is an L-methionine binding site. Residue K273 coordinates L-methionine.

It belongs to the AdoMet synthase family. As to quaternary structure, homotetramer; dimer of dimers. The cofactor is Mg(2+). K(+) serves as cofactor.

It is found in the cytoplasm. It catalyses the reaction L-methionine + ATP + H2O = S-adenosyl-L-methionine + phosphate + diphosphate. It participates in amino-acid biosynthesis; S-adenosyl-L-methionine biosynthesis; S-adenosyl-L-methionine from L-methionine: step 1/1. Functionally, catalyzes the formation of S-adenosylmethionine (AdoMet) from methionine and ATP. The overall synthetic reaction is composed of two sequential steps, AdoMet formation and the subsequent tripolyphosphate hydrolysis which occurs prior to release of AdoMet from the enzyme. The sequence is that of S-adenosylmethionine synthase from Leptospira interrogans serogroup Icterohaemorrhagiae serovar copenhageni (strain Fiocruz L1-130).